Reading from the N-terminus, the 125-residue chain is Profilin-A (125 aa).

Residue S2 is modified to N-acetylserine.

This sequence belongs to the profilin family. In terms of assembly, occurs in many kinds of cells as a complex with monomeric actin in a 1:1 ratio.

It is found in the cytoplasm. The protein localises to the cytoskeleton. Binds to actin and affects the structure of the cytoskeleton. At high concentrations, profilin prevents the polymerization of actin, whereas it enhances it at low concentrations. By binding to PIP2, it inhibits the formation of IP3 and DG. This is Profilin-A (PROA) from Physarum polycephalum (Slime mold).